The primary structure comprises 375 residues: Queuine tRNA-ribosyltransferase (375 aa).

Catalysis depends on aspartate 90, which acts as the Proton acceptor. Substrate contacts are provided by residues 90 to 94 (DSGGF), aspartate 144, glutamine 190, and glycine 217. The interval 248–254 (GIGTPHY) is RNA binding. The Nucleophile role is filled by aspartate 267. The RNA binding; important for wobble base 34 recognition stretch occupies residues 272–276 (ARITR). Positions 305, 307, 310, and 336 each coordinate Zn(2+).

The protein belongs to the queuine tRNA-ribosyltransferase family. As to quaternary structure, homodimer. Within each dimer, one monomer is responsible for RNA recognition and catalysis, while the other monomer binds to the replacement base PreQ1. Zn(2+) is required as a cofactor.

The enzyme catalyses 7-aminomethyl-7-carbaguanine + guanosine(34) in tRNA = 7-aminomethyl-7-carbaguanosine(34) in tRNA + guanine. The protein operates within tRNA modification; tRNA-queuosine biosynthesis. In terms of biological role, catalyzes the base-exchange of a guanine (G) residue with the queuine precursor 7-aminomethyl-7-deazaguanine (PreQ1) at position 34 (anticodon wobble position) in tRNAs with GU(N) anticodons (tRNA-Asp, -Asn, -His and -Tyr). Catalysis occurs through a double-displacement mechanism. The nucleophile active site attacks the C1' of nucleotide 34 to detach the guanine base from the RNA, forming a covalent enzyme-RNA intermediate. The proton acceptor active site deprotonates the incoming PreQ1, allowing a nucleophilic attack on the C1' of the ribose to form the product. After dissociation, two additional enzymatic reactions on the tRNA convert PreQ1 to queuine (Q), resulting in the hypermodified nucleoside queuosine (7-(((4,5-cis-dihydroxy-2-cyclopenten-1-yl)amino)methyl)-7-deazaguanosine). The protein is Queuine tRNA-ribosyltransferase of Borreliella burgdorferi (strain ATCC 35210 / DSM 4680 / CIP 102532 / B31) (Borrelia burgdorferi).